Here is a 145-residue protein sequence, read N- to C-terminus: D-aminoacyl-tRNA deacylase (145 aa).

Residues 137 to 138 (GP) carry the Gly-cisPro motif, important for rejection of L-amino acids motif.

The protein belongs to the DTD family. In terms of assembly, homodimer.

It is found in the cytoplasm. It catalyses the reaction glycyl-tRNA(Ala) + H2O = tRNA(Ala) + glycine + H(+). It carries out the reaction a D-aminoacyl-tRNA + H2O = a tRNA + a D-alpha-amino acid + H(+). Its function is as follows. An aminoacyl-tRNA editing enzyme that deacylates mischarged D-aminoacyl-tRNAs. Also deacylates mischarged glycyl-tRNA(Ala), protecting cells against glycine mischarging by AlaRS. Acts via tRNA-based rather than protein-based catalysis; rejects L-amino acids rather than detecting D-amino acids in the active site. By recycling D-aminoacyl-tRNA to D-amino acids and free tRNA molecules, this enzyme counteracts the toxicity associated with the formation of D-aminoacyl-tRNA entities in vivo and helps enforce protein L-homochirality. The sequence is that of D-aminoacyl-tRNA deacylase from Shewanella frigidimarina (strain NCIMB 400).